The following is a 324-amino-acid chain: Delta-aminolevulinic acid dehydratase (324 aa).

Zn(2+)-binding residues include Cys120, Cys122, and Cys130. Lys195 (schiff-base intermediate with substrate) is an active-site residue. 5-aminolevulinate is bound by residues Arg205 and Arg216. Glu232 serves as a coordination point for Mg(2+). Lys247 serves as the catalytic Schiff-base intermediate with substrate. Residues Ser273 and Tyr312 each contribute to the 5-aminolevulinate site.

This sequence belongs to the ALAD family. In terms of assembly, homooctamer. Requires Zn(2+) as cofactor.

It carries out the reaction 2 5-aminolevulinate = porphobilinogen + 2 H2O + H(+). Its pathway is porphyrin-containing compound metabolism; protoporphyrin-IX biosynthesis; coproporphyrinogen-III from 5-aminolevulinate: step 1/4. Its activity is regulated as follows. Allosteric enzyme. Stimulated by magnesium ions. Its function is as follows. Catalyzes an early step in the biosynthesis of tetrapyrroles. Binds two molecules of 5-aminolevulinate per subunit, each at a distinct site, and catalyzes their condensation to form porphobilinogen. The polypeptide is Delta-aminolevulinic acid dehydratase (hemB) (Escherichia coli (strain K12)).